A 363-amino-acid polypeptide reads, in one-letter code: Carbamoyl phosphate synthase small chain (363 aa).

The interval 1 to 172 (MTKRILMLED…AFASPGDGKR (172 aa)) is CPSase. L-glutamine-binding residues include serine 46, glycine 220, and glycine 222. The Glutamine amidotransferase type-1 domain maps to 172 to 359 (RVVLVDYGVK…MEMMNGKEEG (188 aa)). Cysteine 247 acts as the Nucleophile in catalysis. Leucine 248, glutamine 251, asparagine 289, glycine 291, and tyrosine 292 together coordinate L-glutamine. Active-site residues include histidine 332 and glutamate 334.

Belongs to the CarA family. As to quaternary structure, composed of two chains; the small (or glutamine) chain promotes the hydrolysis of glutamine to ammonia, which is used by the large (or ammonia) chain to synthesize carbamoyl phosphate. Tetramer of heterodimers (alpha,beta)4.

The enzyme catalyses hydrogencarbonate + L-glutamine + 2 ATP + H2O = carbamoyl phosphate + L-glutamate + 2 ADP + phosphate + 2 H(+). The catalysed reaction is L-glutamine + H2O = L-glutamate + NH4(+). The protein operates within amino-acid biosynthesis; L-arginine biosynthesis; carbamoyl phosphate from bicarbonate: step 1/1. It functions in the pathway pyrimidine metabolism; UMP biosynthesis via de novo pathway; (S)-dihydroorotate from bicarbonate: step 1/3. Functionally, small subunit of the glutamine-dependent carbamoyl phosphate synthetase (CPSase). CPSase catalyzes the formation of carbamoyl phosphate from the ammonia moiety of glutamine, carbonate, and phosphate donated by ATP, constituting the first step of 2 biosynthetic pathways, one leading to arginine and/or urea and the other to pyrimidine nucleotides. The small subunit (glutamine amidotransferase) binds and cleaves glutamine to supply the large subunit with the substrate ammonia. In Listeria monocytogenes serotype 4b (strain F2365), this protein is Carbamoyl phosphate synthase small chain.